Reading from the N-terminus, the 126-residue chain is MDEQRDTTDRFLPRFDAAGLVTAIVVDADTQALLMVAHMNADAIEATRATGQAHFWSRSRSALWRKGETSGNGLTLVEMRVDCDQDALLLRVKPAGPACHTGRRSCFYRRVEADGGLTFLADDAQG.

D82 serves as a coordination point for Mg(2+). Residue C83 coordinates Zn(2+). Positions 84 and 86 each coordinate Mg(2+). Residues C99 and C106 each coordinate Zn(2+).

Belongs to the PRA-CH family. As to quaternary structure, homodimer. It depends on Mg(2+) as a cofactor. Zn(2+) is required as a cofactor.

The protein localises to the cytoplasm. It catalyses the reaction 1-(5-phospho-beta-D-ribosyl)-5'-AMP + H2O = 1-(5-phospho-beta-D-ribosyl)-5-[(5-phospho-beta-D-ribosylamino)methylideneamino]imidazole-4-carboxamide. Its pathway is amino-acid biosynthesis; L-histidine biosynthesis; L-histidine from 5-phospho-alpha-D-ribose 1-diphosphate: step 3/9. Functionally, catalyzes the hydrolysis of the adenine ring of phosphoribosyl-AMP. In Sphingopyxis alaskensis (strain DSM 13593 / LMG 18877 / RB2256) (Sphingomonas alaskensis), this protein is Phosphoribosyl-AMP cyclohydrolase.